A 475-amino-acid chain; its full sequence is Beta-amyrin 6-beta-monooxygenase (475 aa).

A helical membrane pass occupies residues Leu6 to Phe22. Residue Cys423 coordinates heme.

This sequence belongs to the cytochrome P450 family. The cofactor is heme. In terms of tissue distribution, specifically expressed in roots.

The protein localises to the membrane. The catalysed reaction is beta-amyrin + reduced [NADPH--hemoprotein reductase] + O2 = daturadiol + oxidized [NADPH--hemoprotein reductase] + H2O + H(+). Catalyzes the C-6 beta-hydroxylation of beta-amyrin to form daturadiol. Catalyzes the C-6 beta-hydroxylation of alpha-amyrin to form 6-beta-hydroxy-alpha-amyrin. This Solanum lycopersicum (Tomato) protein is Beta-amyrin 6-beta-monooxygenase.